The primary structure comprises 324 residues: UDP-N-acetylenolpyruvoylglucosamine reductase (324 aa).

An FAD-binding PCMH-type domain is found at 36–203 (FRAGGLAELM…TSVLFEGYPE (168 aa)). Arg-183 is a catalytic residue. Ser-232 acts as the Proton donor in catalysis. Glu-302 is an active-site residue.

It belongs to the MurB family. The cofactor is FAD.

It localises to the cytoplasm. The enzyme catalyses UDP-N-acetyl-alpha-D-muramate + NADP(+) = UDP-N-acetyl-3-O-(1-carboxyvinyl)-alpha-D-glucosamine + NADPH + H(+). It participates in cell wall biogenesis; peptidoglycan biosynthesis. Cell wall formation. The protein is UDP-N-acetylenolpyruvoylglucosamine reductase of Rhizobium johnstonii (strain DSM 114642 / LMG 32736 / 3841) (Rhizobium leguminosarum bv. viciae).